The primary structure comprises 185 residues: Adenine phosphoribosyltransferase (185 aa).

This sequence belongs to the purine/pyrimidine phosphoribosyltransferase family. In terms of assembly, homodimer.

The protein localises to the cytoplasm. The catalysed reaction is AMP + diphosphate = 5-phospho-alpha-D-ribose 1-diphosphate + adenine. The protein operates within purine metabolism; AMP biosynthesis via salvage pathway; AMP from adenine: step 1/1. In terms of biological role, catalyzes a salvage reaction resulting in the formation of AMP, that is energically less costly than de novo synthesis. The protein is Adenine phosphoribosyltransferase of Pectobacterium atrosepticum (strain SCRI 1043 / ATCC BAA-672) (Erwinia carotovora subsp. atroseptica).